A 507-amino-acid polypeptide reads, in one-letter code: MAPVNQPKDKKHEKAHEHRSEEAKSAGKRKLDYEGLENEPLAKKLFLRKTSKAQEKIGWNRGGTVMRNTRALFHQPKWQCSIVHYVYQNMLGGSIRAQLRQCLQLPFLRSLTSYRLFRTASPFDRRVTCLEWHPTHPSTVAVGSKGGDIILWDYEVLTKTCFIKGKGPGDSLGDIKFSPYEAVKLYVASGDGTLSLQDLEGRAVQVISRAPDCGHENHNVCCWYCSVDVSASCRAVVTGDNLGNVVLLSTSGEEIWKLKLHKKKVTHVEFNSRCEWLLATASVDQTVKIWDLRNIKDKANFLHVLPHDKPVNAAYFSPTDGAKLLSTDQRNEIRVYSCSDWTKPQHLIPHPHRQFQHLTPIKATWHPRYDLIVVGRYPDPKFPGYTVNELRTVDIFDGNTGEMVCQLYDPNASGIISLNKFNPMGDTLASGMGFNILIWSREEMVMKKQEHLLKAMTEQGIGSRSLSRRGGQRQANPGTSKLKAKLLSWEVEEMGTKTKDSKSQGRK.

The disordered stretch occupies residues 1 to 32; it reads MAPVNQPKDKKHEKAHEHRSEEAKSAGKRKLD. Residues 7 to 32 are compositionally biased toward basic and acidic residues; that stretch reads PKDKKHEKAHEHRSEEAKSAGKRKLD. Required for interaction with DDB1 regions lie at residues 81–92 and 100–111; these read SIVHYVYQNMLG and RQCLQLPFLRSL. WD repeat units lie at residues 129–164, 172–207, 223–258, 264–307, and 310–350; these read CLEW…CFIK, LGDI…VQVI, WYCS…IWKL, KVTH…VLPH, and PVNA…LIPH. The DWD box signature appears at 276–294; it reads WLLATASVDQTVKIWDLRN. The tract at residues 355–357 is photolesion recognition; sequence FQH. 2 WD repeats span residues 364 to 407 and 417 to 441; these read TWHP…VCQL and SLNK…IWSR. The disordered stretch occupies residues 459–487; it reads QGIGSRSLSRRGGQRQANPGTSKLKAKLL.

It belongs to the WD repeat DDB2/WDR76 family. Component of the UV-DDB complex which includes DDB1 and DDB2. Component of the DCX (DDB1-CUL4-X-box) E3 ubiquitin-protein ligase complex DDB1-CUL4-ROC1 (also known as CUL4-DDB-ROC1 and CUL4-DDB-RBX1), which includes CUL4A or CUL4B, DDB1, DDB2 and RBX1. DDB2 may function as the substrate recognition module within this complex. A large number of other DCX complexes may also exist in which an alternate substrate targeting subunit replaces DDB2. These targeting subunits are generally known as DCAF (DDB1- and CUL4-associated factor) or CDW (CUL4-DDB1-associated WD40-repeat) proteins.

The protein localises to the nucleus. Its subcellular location is the chromosome. Its pathway is protein modification; protein ubiquitination. Protein, which is both involved in DNA repair and protein ubiquitination, as part of the UV-DDB complex and DCX (DDB1-CUL4-X-box) complexes, respectively. Core component of the UV-DDB complex (UV-damaged DNA-binding protein complex), a complex that recognizes UV-induced DNA damage and recruit proteins of the nucleotide excision repair pathway (the NER pathway) to initiate DNA repair. The UV-DDB complex preferentially binds to cyclobutane pyrimidine dimers (CPD), 6-4 photoproducts (6-4 PP), apurinic sites and short mismatches. Also functions as the substrate recognition module for the DCX (DDB2-CUL4-X-box) E3 ubiquitin-protein ligase complex DDB2-CUL4-ROC1 (also known as CUL4-DDB-ROC1 and CUL4-DDB-RBX1). The DDB2-CUL4-ROC1 complex may ubiquitinate histone H2A, histone H3 and histone H4 at sites of UV-induced DNA damage. The ubiquitination of histones may facilitate their removal from the nucleosome and promote subsequent DNA repair. This Gallus gallus (Chicken) protein is DNA damage-binding protein 2 (DDB2).